The following is a 310-amino-acid chain: Olfactory receptor 7A42 (310 aa).

Over 1-25 the chain is Extracellular; the sequence is MESGNSTRRIPSFFLLGFSENPHLQ. Asn-5 carries N-linked (GlcNAc...) asparagine glycosylation. A helical membrane pass occupies residues 26–46; it reads FLIFVLFLSMYLVTVLGNLLI. Over 47–67 the chain is Cytoplasmic; that stretch reads IMVIITQSPLHTPMYFFLANL. The chain crosses the membrane as a helical span at residues 68–88; sequence SFVDICFTSTTVPKMLVNIQT. The Extracellular segment spans residues 89-100; the sequence is QSKAITYADCIS. Cys-98 and Cys-190 are disulfide-bonded. Residues 101–121 form a helical membrane-spanning segment; the sequence is QMSVFLVFAELDNFLLAVMAY. At 122-135 the chain is on the cytoplasmic side; it reads DRYVAICHPLYYTF. Residues 136–156 form a helical membrane-spanning segment; sequence IVNQHLCILMVLLSWVVSILH. The Extracellular portion of the chain corresponds to 157 to 202; sequence AFLQSSIVLQLTFCGDVKIPHFFCELNQLSQLTCLDSLSSHLIMNL. Residues 203-223 traverse the membrane as a helical segment; that stretch reads VPVLLAVISFSSILYSYFKIV. Topologically, residues 224–240 are cytoplasmic; it reads SSICSISSVQGKYTAFS. The helical transmembrane segment at 241–261 threads the bilayer; sequence TCVSHLSIVFLFYSTGLGVYV. At 262–272 the chain is on the extracellular side; the sequence is SSAVVQSSHSA. A helical membrane pass occupies residues 273 to 293; the sequence is ARASVMYTVVTPMLNPFIYSL. Residues 294–310 are Cytoplasmic-facing; sequence RNKDVKKALERLLEGKL.

It belongs to the G-protein coupled receptor 1 family.

Its subcellular location is the cell membrane. Odorant receptor. In Mus musculus (Mouse), this protein is Olfactory receptor 7A42.